Reading from the N-terminus, the 123-residue chain is Phosphoribosyl-AMP cyclohydrolase (123 aa).

Residue D81 participates in Mg(2+) binding. C82 is a Zn(2+) binding site. Residues D83 and D85 each contribute to the Mg(2+) site. The Zn(2+) site is built by C98 and C105.

Belongs to the PRA-CH family. As to quaternary structure, homodimer. Requires Mg(2+) as cofactor. It depends on Zn(2+) as a cofactor.

It is found in the cytoplasm. The catalysed reaction is 1-(5-phospho-beta-D-ribosyl)-5'-AMP + H2O = 1-(5-phospho-beta-D-ribosyl)-5-[(5-phospho-beta-D-ribosylamino)methylideneamino]imidazole-4-carboxamide. Its pathway is amino-acid biosynthesis; L-histidine biosynthesis; L-histidine from 5-phospho-alpha-D-ribose 1-diphosphate: step 3/9. In terms of biological role, catalyzes the hydrolysis of the adenine ring of phosphoribosyl-AMP. This is Phosphoribosyl-AMP cyclohydrolase from Nocardioides sp. (strain ATCC BAA-499 / JS614).